Reading from the N-terminus, the 165-residue chain is uncharacterized protein (165 aa).

An N-acetyltransferase domain is found at 8-159 (LLVNYKTLEE…QGVQEQTTKP (152 aa)).

This is an uncharacterized protein from Shouchella clausii (strain KSM-K16) (Alkalihalobacillus clausii).